A 334-amino-acid polypeptide reads, in one-letter code: Glycerol-3-phosphate dehydrogenase [NAD(P)+] (334 aa).

Residues Trp-14, Arg-34, and Lys-107 each coordinate NADPH. Sn-glycerol 3-phosphate-binding residues include Lys-107 and Gly-135. An NADPH-binding site is contributed by Ala-139. Sn-glycerol 3-phosphate is bound by residues Lys-190, Asp-243, Ser-253, Arg-254, and Asn-255. Lys-190 functions as the Proton acceptor in the catalytic mechanism. Position 254 (Arg-254) interacts with NADPH. Positions 272 and 273 each coordinate NADPH.

It belongs to the NAD-dependent glycerol-3-phosphate dehydrogenase family.

The protein resides in the cytoplasm. It carries out the reaction sn-glycerol 3-phosphate + NAD(+) = dihydroxyacetone phosphate + NADH + H(+). The enzyme catalyses sn-glycerol 3-phosphate + NADP(+) = dihydroxyacetone phosphate + NADPH + H(+). Its pathway is membrane lipid metabolism; glycerophospholipid metabolism. Catalyzes the reduction of the glycolytic intermediate dihydroxyacetone phosphate (DHAP) to sn-glycerol 3-phosphate (G3P), the key precursor for phospholipid synthesis. This is Glycerol-3-phosphate dehydrogenase [NAD(P)+] from Neorickettsia sennetsu (strain ATCC VR-367 / Miyayama) (Ehrlichia sennetsu).